Here is a 214-residue protein sequence, read N- to C-terminus: Eukaryotic translation initiation factor 4E-1B (214 aa).

MRNA-binding positions include 53–54 (WQ), 99–100 (WE), 154–159 (RAKGDK), and 202–204 (TKS).

In terms of tissue distribution, ovary, muscle and testis.

The protein localises to the cytoplasm. It localises to the nucleus. In terms of biological role, does not appear to be a mRNA-cap-binding protein. The protein is Eukaryotic translation initiation factor 4E-1B of Danio rerio (Zebrafish).